The sequence spans 135 residues: ATP synthase epsilon chain, chloroplastic (135 aa).

Belongs to the ATPase epsilon chain family. As to quaternary structure, F-type ATPases have 2 components, CF(1) - the catalytic core - and CF(0) - the membrane proton channel. CF(1) has five subunits: alpha(3), beta(3), gamma(1), delta(1), epsilon(1). CF(0) has three main subunits: a, b and c.

The protein localises to the plastid. It localises to the chloroplast thylakoid membrane. Functionally, produces ATP from ADP in the presence of a proton gradient across the membrane. This chain is ATP synthase epsilon chain, chloroplastic, found in Stigeoclonium helveticum (Green alga).